The following is a 547-amino-acid chain: ATP synthase subunit alpha (547 aa).

Residue 172-179 participates in ATP binding; sequence GDRKTGKT.

Belongs to the ATPase alpha/beta chains family. In terms of assembly, F-type ATPases have 2 components, CF(1) - the catalytic core - and CF(0) - the membrane proton channel. CF(1) has five subunits: alpha(3), beta(3), gamma(1), delta(1), epsilon(1). CF(0) has three main subunits: a(1), b(2) and c(9-12). The alpha and beta chains form an alternating ring which encloses part of the gamma chain. CF(1) is attached to CF(0) by a central stalk formed by the gamma and epsilon chains, while a peripheral stalk is formed by the delta and b chains.

The protein resides in the cell membrane. The catalysed reaction is ATP + H2O + 4 H(+)(in) = ADP + phosphate + 5 H(+)(out). In terms of biological role, produces ATP from ADP in the presence of a proton gradient across the membrane. The alpha chain is a regulatory subunit. This Rhodococcus opacus (strain B4) protein is ATP synthase subunit alpha.